Reading from the N-terminus, the 32-residue chain is Cytochrome b6-f complex subunit 6 (32 aa).

Residues 4-26 (ITSYVGLLFTALGFTLGLYFGLT) traverse the membrane as a helical segment.

This sequence belongs to the PetL family. In terms of assembly, the 4 large subunits of the cytochrome b6-f complex are cytochrome b6, subunit IV (17 kDa polypeptide, PetD), cytochrome f and the Rieske protein, while the 4 small subunits are PetG, PetL, PetM and PetN. The complex functions as a dimer.

It is found in the plastid. The protein resides in the chloroplast thylakoid membrane. Its function is as follows. Component of the cytochrome b6-f complex, which mediates electron transfer between photosystem II (PSII) and photosystem I (PSI), cyclic electron flow around PSI, and state transitions. PetL is important for photoautotrophic growth as well as for electron transfer efficiency and stability of the cytochrome b6-f complex. The chain is Cytochrome b6-f complex subunit 6 from Tetradesmus obliquus (Green alga).